The following is a 275-amino-acid chain: Putative hydro-lyase SPO1111 (275 aa).

The protein belongs to the D-glutamate cyclase family.

The polypeptide is Putative hydro-lyase SPO1111 (Ruegeria pomeroyi (strain ATCC 700808 / DSM 15171 / DSS-3) (Silicibacter pomeroyi)).